Here is a 355-residue protein sequence, read N- to C-terminus: UDP-N-acetylglucosamine--N-acetylmuramyl-(pentapeptide) pyrophosphoryl-undecaprenol N-acetylglucosamine transferase (355 aa).

UDP-N-acetyl-alpha-D-glucosamine contacts are provided by residues 14 to 16 (TGG), Asn123, Arg164, Ser190, and Gln284.

The protein belongs to the glycosyltransferase 28 family. MurG subfamily.

It is found in the cell inner membrane. The enzyme catalyses di-trans,octa-cis-undecaprenyl diphospho-N-acetyl-alpha-D-muramoyl-L-alanyl-D-glutamyl-meso-2,6-diaminopimeloyl-D-alanyl-D-alanine + UDP-N-acetyl-alpha-D-glucosamine = di-trans,octa-cis-undecaprenyl diphospho-[N-acetyl-alpha-D-glucosaminyl-(1-&gt;4)]-N-acetyl-alpha-D-muramoyl-L-alanyl-D-glutamyl-meso-2,6-diaminopimeloyl-D-alanyl-D-alanine + UDP + H(+). It participates in cell wall biogenesis; peptidoglycan biosynthesis. Its function is as follows. Cell wall formation. Catalyzes the transfer of a GlcNAc subunit on undecaprenyl-pyrophosphoryl-MurNAc-pentapeptide (lipid intermediate I) to form undecaprenyl-pyrophosphoryl-MurNAc-(pentapeptide)GlcNAc (lipid intermediate II). This chain is UDP-N-acetylglucosamine--N-acetylmuramyl-(pentapeptide) pyrophosphoryl-undecaprenol N-acetylglucosamine transferase, found in Synechocystis sp. (strain ATCC 27184 / PCC 6803 / Kazusa).